Here is an 875-residue protein sequence, read N- to C-terminus: MAVALQQQSKTNMGPKGITFSGNTFTVPETHDMVKTLFDPTVRKSYFELVILALLASNGLVFWLVKTNSTRIEIFIGLYLFWRLSYNFGIGYLLHQQSNYHKLVNWANKLNIFDEKNHSIASRLIKSEISAQMGPKYKISKYPVDFNTWLVFRKVVDLILMSDFTTFIGVVVTCAMDNDLQFLNTSQQEPWIVYSRLIVGAGLILFNLWVKVDAHNIIKDYAWYWGDFFFRQINNEDLIFDGVFEMFPHPMYSVGYAGYYGFALIAKSYRVLVVAVFGHFLQMIFLHYIENPHIDKLYGPSGNEADYQKITKIKDLKNFDNLKPLVGLYNFSWLRAADLLTLIMVTTYSVIIPAFASSIVGTAQFRGAKINIAHCMFALTVAIKVFESLSINIFLVLQSYYKLFTKRYLANDIPIEKSLSNWAIIYNGLISWTYASFVGLNFFHYITGMEYSKFYFYDWVYLRSFLGALLILTQVWINSSIIDSIGYFGWFYGDFFLPTSPQRSHLTKAGVYRYLNNPEQLFGVCGVMGLTLIAPSLENFVCCLLWVSNNFFRINFVEKVHMIKVYGEKEVFQDSGVTKTFKKQLIPDVISRRLSSNDEAPNFGRHRSTSHLVTGITDTLESFIKELRQSNAKLSRQNLLELSQNLYFDNSDYQITIDNLQKSDDRMPKYTTIGTPIEITWKCPENHSDKDWIGLYKVVQTTYSRSKTLISSSGRWTWVESTRGSYVFTGSKLFWEEGIYEFRFHLDGKHEVAYISEPFEIKAPKIEVPDTLSASKEFAEQLKLSVFDPVTDIKIPSIESPICDTVEKSHHLLETYRRLAKLISTSTGITISSNFLFNAGTEHELSVHQLSKKLINIKKVLEDLSPAAIDEKKRQ.

Residues methionine 1–lysine 44 lie on the Lumenal side of the membrane. The helical transmembrane segment at serine 45–valine 65 threads the bilayer. At lysine 66–glutamate 73 the chain is on the cytoplasmic side. Residues isoleucine 74 to leucine 94 form a helical membrane-spanning segment. Residues histidine 95 to lysine 154 lie on the Lumenal side of the membrane. A helical transmembrane segment spans residues valine 155 to alanine 175. The Cytoplasmic portion of the chain corresponds to methionine 176–glutamate 189. The helical transmembrane segment at proline 190–valine 210 threads the bilayer. Topologically, residues lysine 211–glutamate 245 are lumenal. Residues methionine 246 to alanine 266 form a helical membrane-spanning segment. Topologically, residues lysine 267 to arginine 270 are cytoplasmic. Residues valine 271–asparagine 291 traverse the membrane as a helical segment. Topologically, residues proline 292–leucine 339 are lumenal. A helical membrane pass occupies residues leucine 340–valine 360. At glycine 361–methionine 376 the chain is on the cytoplasmic side. A helical transmembrane segment spans residues phenylalanine 377–leucine 397. Topologically, residues glutamine 398–tryptophan 422 are lumenal. The chain crosses the membrane as a helical span at residues alanine 423–phenylalanine 443. At histidine 444–serine 464 the chain is on the cytoplasmic side. The chain crosses the membrane as a helical span at residues phenylalanine 465–isoleucine 485. Residues glycine 486–glycine 526 lie on the Lumenal side of the membrane. Residues valine 527–valine 547 form a helical membrane-spanning segment. The Cytoplasmic segment spans residues serine 548–glutamine 875.

This sequence belongs to the class VI-like SAM-binding methyltransferase superfamily. CHO2 family.

It localises to the endoplasmic reticulum membrane. The enzyme catalyses a 1,2-diacyl-sn-glycero-3-phosphoethanolamine + S-adenosyl-L-methionine = a 1,2-diacyl-sn-glycero-3-phospho-N-methylethanolamine + S-adenosyl-L-homocysteine + H(+). It functions in the pathway phospholipid metabolism; phosphatidylcholine biosynthesis. In terms of biological role, catalyzes the first step of the methylation pathway of phosphatidylcholine biosynthesis, the SAM-dependent methylation of phosphatidylethanolamine (PE) to phosphatidylmonomethylethanolamine (PMME). The chain is Phosphatidylethanolamine N-methyltransferase (CHO2) from Meyerozyma guilliermondii (strain ATCC 6260 / CBS 566 / DSM 6381 / JCM 1539 / NBRC 10279 / NRRL Y-324) (Yeast).